Here is a 368-residue protein sequence, read N- to C-terminus: 2-aminoethylphosphonate--pyruvate transaminase (368 aa).

The residue at position 192 (lysine 192) is an N6-(pyridoxal phosphate)lysine.

This sequence belongs to the class-V pyridoxal-phosphate-dependent aminotransferase family. PhnW subfamily. Homodimer. Requires pyridoxal 5'-phosphate as cofactor.

It carries out the reaction (2-aminoethyl)phosphonate + pyruvate = phosphonoacetaldehyde + L-alanine. In terms of biological role, involved in phosphonate degradation. The chain is 2-aminoethylphosphonate--pyruvate transaminase from Pseudomonas entomophila (strain L48).